Consider the following 546-residue polypeptide: DNA ligase (546 aa).

Glu-244 lines the ATP pocket. Residue Lys-246 is the N6-AMP-lysine intermediate of the active site. Residues Arg-251, Arg-266, Glu-295, Phe-334, Arg-405, and Lys-411 each contribute to the ATP site.

It belongs to the ATP-dependent DNA ligase family. It depends on Mg(2+) as a cofactor.

The catalysed reaction is ATP + (deoxyribonucleotide)n-3'-hydroxyl + 5'-phospho-(deoxyribonucleotide)m = (deoxyribonucleotide)n+m + AMP + diphosphate.. In terms of biological role, DNA ligase that seals nicks in double-stranded DNA during DNA replication, DNA recombination and DNA repair. This chain is DNA ligase, found in Methanocorpusculum labreanum (strain ATCC 43576 / DSM 4855 / Z).